Reading from the N-terminus, the 413-residue chain is Docking protein 2 (413 aa).

One can recognise a PH domain in the interval 4–114; sequence VVVKQGFLYL…WIQAICLLAF (111 aa). In terms of domain architecture, IRS-type PTB spans 147–252; sequence PQKEFAVTVR…SAQKNAAPPG (106 aa). Residues 247–292 form a disordered region; it reads NAAPPGPQTQPVPVPAVLPRPESPYARPHDSLPPPSPTVPVPTPRQ. A compositionally biased stretch (pro residues) spans 250–268; the sequence is PPGPQTQPVPVPAVLPRPE. Y271 carries the post-translational modification Phosphotyrosine. Pro residues predominate over residues 277–289; sequence SLPPPSPTVPVPT. Residues Y300 and Y346 each carry the phosphotyrosine modification. Positions 362–381 are enriched in basic and acidic residues; sequence QEPRGEAWRRQATADRDSSG. Residues 362–383 are disordered; the sequence is QEPRGEAWRRQATADRDSSGLK.

This sequence belongs to the DOK family. Type A subfamily. In terms of assembly, interacts with phosphorylated RASGAP and EGFR. Interacts with RET and NCK. Interacts (via PH domain) with TEK/TIE2 (tyrosine phosphorylated). In terms of processing, on immunoreceptor stimulation, phosphorylated on C-terminal tyrosine residues. Phosphorylation on Tyr-346 is required for binding to the SH2 domain of NCK. Phosphorylation on both Tyr-271 and Tyr-300 is required for interaction with RASGAP. Phosphorylated on tyrosine residues by TEK/TIE2.

Functionally, DOK proteins are enzymatically inert adaptor or scaffolding proteins. They provide a docking platform for the assembly of multimolecular signaling complexes. DOK2 may modulate the cellular proliferation induced by IL-4, as well as IL-2 and IL-3. May be involved in modulating Bcr-Abl signaling. Attenuates EGF-stimulated MAP kinase activation. The sequence is that of Docking protein 2 (DOK2) from Bos taurus (Bovine).